The chain runs to 153 residues: Cytochrome c-type biogenesis protein CcmE (153 aa).

The Cytoplasmic portion of the chain corresponds to 1–8; the sequence is MMTPRQRR. The chain crosses the membrane as a helical; Signal-anchor for type II membrane protein span at residues 9–29; that stretch reads MTWVALMVAGVSLAAFFALTA. The Periplasmic portion of the chain corresponds to 30-153; sequence FQKNLLYFYT…PADYSEYRKK (124 aa). His-124 and Tyr-128 together coordinate heme. The disordered stretch occupies residues 134-153; it reads AESLKKNGGLPADYSEYRKK.

This sequence belongs to the CcmE/CycJ family.

It is found in the cell inner membrane. In terms of biological role, heme chaperone required for the biogenesis of c-type cytochromes. Transiently binds heme delivered by CcmC and transfers the heme to apo-cytochromes in a process facilitated by CcmF and CcmH. The sequence is that of Cytochrome c-type biogenesis protein CcmE from Methylococcus capsulatus (strain ATCC 33009 / NCIMB 11132 / Bath).